The sequence spans 298 residues: MLYQQISQNKQRTVVLLVVFFALLALIGASAGYLLLDNYAMGLVLALVIGVIYATSMIFQSTSLVMSMNSAREVTEKEAPGFFHIVEDMAMVAQIPMPRVFIIEDPSLNAFATGSSPQNAAVAATTGLLEVMNREELEGVIGHEISHIRNYDIRISTIAVALASAVTVISSIGGRMLWYGGGSRRQRDDGDDDVLRIITLLLSLLSLLLAPLVASLIQLAISRQREYLADASSVELTRNPQGMIKALEKLQLSQPMKHPVDDASAALYINEPRKKRSFSSLFSTHPPIEERIERLKNM.

The next 2 helical transmembrane spans lie at V14 to L34 and Y39 to F59. H143 serves as a coordination point for Zn(2+). E144 is a catalytic residue. H147 provides a ligand contact to Zn(2+). 2 helical membrane passes run I158 to W178 and I197 to I217. E226 lines the Zn(2+) pocket.

It belongs to the peptidase M48B family. The cofactor is Zn(2+).

The protein resides in the cell membrane. This is Protease HtpX homolog from Streptococcus pyogenes serotype M3 (strain SSI-1).